We begin with the raw amino-acid sequence, 409 residues long: Tyrosine--tRNA ligase (409 aa).

Tyrosine 39 is a binding site for L-tyrosine. Positions 44-53 (PTAASLHVGS) match the 'HIGH' region motif. The L-tyrosine site is built by tyrosine 176 and glutamine 180. Residues 236-240 (KMGKT) carry the 'KMSKS' region motif. Lysine 239 is an ATP binding site. The region spanning 346–408 (ISLVDALVGL…GKKAHGVIQA (63 aa)) is the S4 RNA-binding domain.

Belongs to the class-I aminoacyl-tRNA synthetase family. TyrS type 1 subfamily. Homodimer.

It is found in the cytoplasm. It catalyses the reaction tRNA(Tyr) + L-tyrosine + ATP = L-tyrosyl-tRNA(Tyr) + AMP + diphosphate + H(+). Functionally, catalyzes the attachment of tyrosine to tRNA(Tyr) in a two-step reaction: tyrosine is first activated by ATP to form Tyr-AMP and then transferred to the acceptor end of tRNA(Tyr). The chain is Tyrosine--tRNA ligase from Zymomonas mobilis subsp. mobilis (strain ATCC 31821 / ZM4 / CP4).